A 661-amino-acid polypeptide reads, in one-letter code: Kyphoscoliosis peptidase (661 aa).

Positions Gly116 to Trp137 are disordered. Active-site residues include Cys225, His267, and Asp282.

It belongs to the transglutaminase-like superfamily. As to quaternary structure, interacts with IGFN1 and FLNC. Specifically expressed in skeletal and cardiac muscle.

It is found in the cytoplasm. Its subcellular location is the cytoskeleton. It localises to the myofibril. The protein localises to the sarcomere. The protein resides in the z line. Functionally, probable cytoskeleton-associated protease required for normal muscle growth. Involved in function, maturation and stabilization of the neuromuscular junction. May act by cleaving muscle-specific proteins such as FLNC. The sequence is that of Kyphoscoliosis peptidase from Mus musculus (Mouse).